The sequence spans 103 residues: Large ribosomal subunit protein bL21 (103 aa).

It belongs to the bacterial ribosomal protein bL21 family. As to quaternary structure, part of the 50S ribosomal subunit. Contacts protein L20.

This protein binds to 23S rRNA in the presence of protein L20. This Acetivibrio thermocellus (strain ATCC 27405 / DSM 1237 / JCM 9322 / NBRC 103400 / NCIMB 10682 / NRRL B-4536 / VPI 7372) (Clostridium thermocellum) protein is Large ribosomal subunit protein bL21.